The following is a 306-amino-acid chain: Agmatinase (306 aa).

Mn(2+)-binding residues include His126, Asp149, His151, Asp153, Asp230, and Asp232.

It belongs to the arginase family. Agmatinase subfamily. It depends on Mn(2+) as a cofactor.

The catalysed reaction is agmatine + H2O = urea + putrescine. It functions in the pathway amine and polyamine biosynthesis; putrescine biosynthesis via agmatine pathway; putrescine from agmatine: step 1/1. Functionally, catalyzes the formation of putrescine from agmatine. This is Agmatinase from Shigella dysenteriae serotype 1 (strain Sd197).